The sequence spans 309 residues: Testis-expressed protein 264 homolog (309 aa).

At 1–3 the chain is on the lumenal side; that stretch reads MPD. Residues 4 to 24 form a helical; Signal-anchor for type III membrane protein membrane-spanning segment; it reads LLLLGLIGALTLLLLLTLLAF. The Cytoplasmic segment spans residues 25 to 309; the sequence is AGYSGLLTGV…ELSTPERGEE (285 aa). A disordered region spans residues 193 to 309; that stretch reads PEVKETERKC…ELSTPERGEE (117 aa). Residues 208–225 are compositionally biased toward low complexity; that stretch reads ATDTQTDGTGADTSDASS. 2 positions are modified to phosphoserine: Ser238 and Ser243. The segment covering 250–262 has biased composition (basic and acidic residues); that stretch reads GWDDGDNRSEHSY. Residues 263-272 are compositionally biased toward low complexity; sequence SESGASGSSF. An LIR motif motif is present at residues 272-275; sequence FEEL.

In terms of assembly, interacts (via the LIR motif) with ATG8 family proteins MAP1LC3A, MAP1LC3B, GABARAP and GABARAPL1. Interacts with VCP/p97; bridging VCP/p97 to covalent DNA-protein cross-links (DPCs). Interacts with TOP1 (when sumoylated).

The protein localises to the endoplasmic reticulum membrane. It localises to the cytoplasmic vesicle. The protein resides in the autophagosome. It is found in the cytoplasm. Its subcellular location is the cytosol. The protein localises to the nucleus. It localises to the chromosome. In terms of biological role, major reticulophagy (also called ER-phagy) receptor that acts independently of other candidate reticulophagy receptors to remodel subdomains of the endoplasmic reticulum into autophagosomes upon nutrient stress, which then fuse with lysosomes for endoplasmic reticulum turnover. The ATG8-containing isolation membrane (IM) cradles a tubular segment of TEX264-positive ER near a three-way junction, allowing the formation of a synapse of 2 juxtaposed membranes with trans interaction between the TEX264 and ATG8 proteins. Expansion of the IM would extend the capture of ER, possibly through a 'zipper-like' process involving continued trans TEX264-ATG8 interactions, until poorly understood mechanisms lead to the fission of relevant membranes and, ultimately, autophagosomal membrane closure. Also involved in the repair of covalent DNA-protein cross-links (DPCs) during DNA synthesis: acts by bridging VCP/p97 to covalent DNA-protein cross-links (DPCs) and initiating resolution of DPCs by SPRTN. This chain is Testis-expressed protein 264 homolog, found in Mus musculus (Mouse).